We begin with the raw amino-acid sequence, 251 residues long: Mlc titration factor A (251 aa).

Positions 111, 148, 152, and 211 each coordinate Zn(2+).

The protein belongs to the MtfA family. As to quaternary structure, interacts with Mlc. Zn(2+) serves as cofactor.

The protein resides in the cytoplasm. In terms of biological role, involved in the modulation of the activity of the glucose-phosphotransferase system (glucose-PTS). Interacts with the transcriptional repressor Mlc, preventing its interaction with DNA and leading to the modulation of expression of genes regulated by Mlc, including ptsG, which encodes the PTS system glucose-specific EIICB component. Shows zinc-dependent metallopeptidase activity. The sequence is that of Mlc titration factor A from Salmonella arizonae (strain ATCC BAA-731 / CDC346-86 / RSK2980).